A 961-amino-acid chain; its full sequence is Glycine dehydrogenase (decarboxylating) (961 aa).

Residue lysine 702 is modified to N6-(pyridoxal phosphate)lysine.

This sequence belongs to the GcvP family. As to quaternary structure, the glycine cleavage system is composed of four proteins: P, T, L and H. Requires pyridoxal 5'-phosphate as cofactor.

The catalysed reaction is N(6)-[(R)-lipoyl]-L-lysyl-[glycine-cleavage complex H protein] + glycine + H(+) = N(6)-[(R)-S(8)-aminomethyldihydrolipoyl]-L-lysyl-[glycine-cleavage complex H protein] + CO2. Functionally, the glycine cleavage system catalyzes the degradation of glycine. The P protein binds the alpha-amino group of glycine through its pyridoxal phosphate cofactor; CO(2) is released and the remaining methylamine moiety is then transferred to the lipoamide cofactor of the H protein. The protein is Glycine dehydrogenase (decarboxylating) of Rhodopseudomonas palustris (strain BisA53).